The chain runs to 197 residues: Phosphoheptose isomerase (197 aa).

One can recognise an SIS domain in the interval 37-197; that stretch reads MLQCLMNDGK…CIDSVLLEGM (161 aa). Residue 52–54 coordinates substrate; it reads NGG. The Zn(2+) site is built by histidine 61 and glutamate 65. Residues glutamate 65, 94 to 95, 120 to 122, serine 125, and glutamine 175 each bind substrate; these read ND and STS. Zn(2+) is bound by residues glutamine 175 and histidine 183.

It belongs to the SIS family. GmhA subfamily. Homotetramer. Zn(2+) serves as cofactor.

The protein localises to the cytoplasm. The catalysed reaction is 2 D-sedoheptulose 7-phosphate = D-glycero-alpha-D-manno-heptose 7-phosphate + D-glycero-beta-D-manno-heptose 7-phosphate. It functions in the pathway carbohydrate biosynthesis; D-glycero-D-manno-heptose 7-phosphate biosynthesis; D-glycero-alpha-D-manno-heptose 7-phosphate and D-glycero-beta-D-manno-heptose 7-phosphate from sedoheptulose 7-phosphate: step 1/1. Functionally, catalyzes the isomerization of sedoheptulose 7-phosphate in D-glycero-D-manno-heptose 7-phosphate. This Neisseria meningitidis serogroup C / serotype 2a (strain ATCC 700532 / DSM 15464 / FAM18) protein is Phosphoheptose isomerase.